The following is a 235-amino-acid chain: MSDLSLLQCTNLSKRYQDGKLSTDVLRDVSFEMSSGEMMAIVGSSGSGKSTLLHVLGGLDTPTSGEVIFKGQPLSTLSAAAKADLRNRELGFIYQFHHLLPDFTALENVAMPLLIGKVPTSQAQDKAREMLAAVGLEARSHHRSSELSGGERQRVAIARALVNSPSLVLADEPTGNLDQRTADTIFELLGELNVRQGTAFLVVTHDLQLAGRLNRQLEMRDGQLQQELTLMGARQ.

The ABC transporter domain maps to 7–234 (LQCTNLSKRY…QQELTLMGAR (228 aa)). ATP is bound at residue 43-50 (GSSGSGKS).

It belongs to the ABC transporter superfamily. Lipoprotein translocase (TC 3.A.1.125) family. In terms of assembly, the complex is composed of two ATP-binding proteins (LolD) and two transmembrane proteins (LolC and LolE).

Its subcellular location is the cell inner membrane. In terms of biological role, part of the ABC transporter complex LolCDE involved in the translocation of mature outer membrane-directed lipoproteins, from the inner membrane to the periplasmic chaperone, LolA. Responsible for the formation of the LolA-lipoprotein complex in an ATP-dependent manner. In Pectobacterium atrosepticum (strain SCRI 1043 / ATCC BAA-672) (Erwinia carotovora subsp. atroseptica), this protein is Lipoprotein-releasing system ATP-binding protein LolD.